A 235-amino-acid polypeptide reads, in one-letter code: MHSNLPGYWLVYSIRVLAIECIRLAPEYLPFEEGWRMQQELHKKITESQTNKNRQASMIFCEHEPVYTAGARTRSWEMPQNEKVIRVGRGGKITWHGPGQLVGYPILSLGATPDVLRYVRQIEEGLINALQSVGINGFRIAGRSGVWVRNGVSDEKVAAIGVRVQKNVTLHGFALNCSNDLAPFEKIVPCGISDAGVTTISRILKRTITPKEILDSVFNSICSALEYINTCRGNV.

One can recognise a BPL/LPL catalytic domain in the interval 52–229 (KNRQASMIFC…SICSALEYIN (178 aa)). Residues 89-96 (RGGKITWH), 159-161 (AIG), and 172-174 (GFA) contribute to the substrate site. C190 acts as the Acyl-thioester intermediate in catalysis.

This sequence belongs to the LipB family.

The protein resides in the cytoplasm. It catalyses the reaction octanoyl-[ACP] + L-lysyl-[protein] = N(6)-octanoyl-L-lysyl-[protein] + holo-[ACP] + H(+). It participates in protein modification; protein lipoylation via endogenous pathway; protein N(6)-(lipoyl)lysine from octanoyl-[acyl-carrier-protein]: step 1/2. Functionally, catalyzes the transfer of endogenously produced octanoic acid from octanoyl-acyl-carrier-protein onto the lipoyl domains of lipoate-dependent enzymes. Lipoyl-ACP can also act as a substrate although octanoyl-ACP is likely to be the physiological substrate. The polypeptide is Octanoyltransferase (Tropheryma whipplei (strain Twist) (Whipple's bacillus)).